A 473-amino-acid chain; its full sequence is Notchless protein homolog (473 aa).

Positions 9-91 (GKTVMCLLTD…VLTIVYQQQA (83 aa)) are ubiquitin-like (UBL) domain. 8 WD repeats span residues 107–146 (GHAEAVLCVSFSPDGKQLASGSGDTTVRLWDLYTETPLFT), 149–188 (GHKNWVLTVAWSPDGKHLVSGSKSGEICCWNPKKGELEGS), 192–236 (GHKK…SIIC), 239–277 (GHTLAVTCVKWGGDGIIYTGSQDCTIKMWETTQGKLIRE), 313–354 (EKQK…QPKK), 358–399 (GHQQ…TVFR), 400–439 (GHVGPVYQVSWSADSRLLLSGSKDSTLKIWEIRTKKLKQD), and 442–473 (GHADEVFAVDWSPDGEKVVSGGKDRVLKLWKG). The DWD box motif lies at 417 to 432 (LLSGSKDSTLKIWEIR).

The protein belongs to the NLE1/RSA4 family. In terms of assembly, associates with the pre-60S ribosomal particle. Constitutively and ubiquitously expressed.

It localises to the nucleus. The protein localises to the nucleolus. Required for female gametophyte development. The polypeptide is Notchless protein homolog (Arabidopsis thaliana (Mouse-ear cress)).